The chain runs to 237 residues: tRNA(His) guanylyltransferase (237 aa).

Mg(2+)-binding residues include Asp-29, Gly-30, and Asp-77. Residues 29-34 (DGKKFH) and 76-77 (SD) contribute to the GTP site.

The protein belongs to the tRNA(His) guanylyltransferase family. Mg(2+) is required as a cofactor.

The catalysed reaction is a 5'-end ribonucleotide-tRNA(His) + GTP + ATP + H2O = a 5'-end phospho-guanosine-ribonucleotide-tRNA(His) + AMP + 2 diphosphate + H(+). In terms of biological role, adds a GMP to the 5'-end of tRNA(His) after transcription and RNase P cleavage. In Candida glabrata (strain ATCC 2001 / BCRC 20586 / JCM 3761 / NBRC 0622 / NRRL Y-65 / CBS 138) (Yeast), this protein is tRNA(His) guanylyltransferase (THG1).